Reading from the N-terminus, the 279-residue chain is Digeranylgeranylglyceryl phosphate synthase (279 aa).

8 helical membrane-spanning segments follow: residues 14 to 34 (VKNC…ASNF), 36 to 56 (FGLI…CGFG), 94 to 114 (LMIS…IALI), 131 to 153 (IIGN…ASVG), 157 to 175 (ITLI…REII), 201 to 221 (IFVA…PYIL), 224 to 244 (FGAP…LAVL), and 259 to 279 (SKYI…GSLM).

It belongs to the UbiA prenyltransferase family. DGGGP synthase subfamily. The cofactor is Mg(2+).

It is found in the cell membrane. It catalyses the reaction sn-3-O-(geranylgeranyl)glycerol 1-phosphate + (2E,6E,10E)-geranylgeranyl diphosphate = 2,3-bis-O-(geranylgeranyl)-sn-glycerol 1-phosphate + diphosphate. It functions in the pathway membrane lipid metabolism; glycerophospholipid metabolism. In terms of biological role, prenyltransferase that catalyzes the transfer of the geranylgeranyl moiety of geranylgeranyl diphosphate (GGPP) to the C2 hydroxyl of (S)-3-O-geranylgeranylglyceryl phosphate (GGGP). This reaction is the second ether-bond-formation step in the biosynthesis of archaeal membrane lipids. The sequence is that of Digeranylgeranylglyceryl phosphate synthase from Methanococcus aeolicus (strain ATCC BAA-1280 / DSM 17508 / OCM 812 / Nankai-3).